The sequence spans 336 residues: Gibberellin 2-beta-dioxygenase 7 (336 aa).

The 101-residue stretch at 191–291 (LENSFLRLNK…RMSIAFFVCP (101 aa)) folds into the Fe2OG dioxygenase domain. 3 residues coordinate Fe cation: H216, D218, and H272. The active site involves R282. R282 is a 2-oxoglutarate binding site.

It belongs to the iron/ascorbate-dependent oxidoreductase family. GA2OX subfamily. Fe(2+) is required as a cofactor.

It carries out the reaction gibberellin A1 + 2-oxoglutarate + O2 = gibberellin A8 + succinate + CO2. It participates in plant hormone biosynthesis; gibberellin biosynthesis. Its function is as follows. Catalyzes the 2-beta-hydroxylation of gibberellins (GA) precursors, rendering them unable to be converted to active GAs. Hydroxylates the C20-GA GA12 and GA53, but is not active on C19-GAs, like GA1, GA4, GA9 and GA20. The protein is Gibberellin 2-beta-dioxygenase 7 (GA2OX7) of Arabidopsis thaliana (Mouse-ear cress).